A 104-amino-acid polypeptide reads, in one-letter code: Integration host factor subunit beta (104 aa).

The span at 83–95 (GKEMRERLNRDSG) shows a compositional bias: basic and acidic residues. The disordered stretch occupies residues 83 to 104 (GKEMRERLNRDSGDDAPTSDTA).

The protein belongs to the bacterial histone-like protein family. As to quaternary structure, heterodimer of an alpha and a beta chain.

Functionally, this protein is one of the two subunits of integration host factor, a specific DNA-binding protein that functions in genetic recombination as well as in transcriptional and translational control. This chain is Integration host factor subunit beta, found in Rhodopseudomonas palustris (strain ATCC BAA-98 / CGA009).